The primary structure comprises 295 residues: THO complex subunit 4C (295 aa).

The tract at residues 1 to 67 (MSDALNMTLD…GPLAVNTRPS (67 aa)) is disordered. At Ser2 the chain carries N-acetylserine. Residues 11–22 (EIVKKSKSERSA) show a composition bias toward basic and acidic residues. A compositionally biased stretch (gly residues) spans 38-55 (GRGGPNGVVGGGRGGGPV). One can recognise an RRM domain in the interval 107–184 (TTVYITNLDQ…RPMKLEILGG (78 aa)). Residues 212 to 295 (QGVRGGRVGR…SYHAEAMNIS (84 aa)) form a disordered region. Composition is skewed to gly residues over residues 213–227 (GVRG…GSGP) and 242–267 (VTAG…SGGR). A compositionally biased stretch (basic and acidic residues) spans 271 to 288 (KPVEKSAADLDKDLESYH).

Belongs to the ALYREF family. In terms of assembly, interacts with PARP1.

The protein localises to the nucleus. Its subcellular location is the nucleoplasm. It localises to the nucleolus. Its function is as follows. Export adapter involved in nuclear export of spliced and unspliced mRNA. This Arabidopsis thaliana (Mouse-ear cress) protein is THO complex subunit 4C.